The primary structure comprises 202 residues: IVGTIAAAAMTVTHVASGRLNDYILKLEEPNGILLHFKAPLFSIIQEGYAVPKSSLVGTGTSNNEGLLDRNGVDEMLNEKYAVQYASETLFSKDLYNAASNPDSAVGFKLMESPEININERNDWPVASTLLRSSNVNVNLKNSDTPLNLAYFIDQGADINTRNGHLNIVKYLVEEEDLSVDGSKYGIDMTIRTALDIATDLK.

ANK repeat units lie at residues 95 to 109 (LYNAASNPDSAVGFK), 110 to 120 (LMESPEININE), 122 to 132 (NDWPVASTLLR), 133 to 138 (SSNVNV), 142 to 161 (NSDTPLNLAYFIDQGADINT), 163 to 170 (NGHLNIVK), 171 to 182 (YLVEEEDLSVDG), Lys184, 185 to 191 (YGIDMTI), and 193 to 202 (TALDIATDLK). The interval 175 to 181 (EEDLSVD) is 4C4.1 epitope.

The protein belongs to the cationic peptide 01 (latrotoxin) family. 03 (alpha-latrotoxin) subfamily. Homotetramer in membranes. Post-translationally, processed by furin-like proteases at both the N- and C-termini. Contains 1 disulfide bond. In terms of tissue distribution, expressed in venom gland, cephalothorax, and abdomen tissues from both males and females.

It is found in the secreted. The protein resides in the target cell membrane. Functionally, presynaptic neurotoxin that causes massive release of neurotransmitters from vertebrate (but not invertebrate) nerve terminals and endocrine cells via a complex mechanism involving activation of receptor(s) and toxin insertion into the plasma membrane with subsequent pore formation. Binds to neurexin-1-alpha (NRXN1) in a calcium dependent manner, adhesion G protein-coupled receptor L1 (ADGRL1, also termed latrophilin-1 and calcium-independent receptor of latrotoxin (CIRL)), and receptor-type tyrosine-protein phosphatase S (PTPRS), also termed PTP sigma. NRXN1 and PTPRS are suggested to provide a platform for binding and subsequent pore formation events. In contrast, binding to ADGRL1 does not involve oligomerization and channel formation, but direct downstream stimulation of the synaptic fusion machinery. In Latrodectus mactans (Black widow spider), this protein is Alpha-latrotoxin-Lm1a.